The sequence spans 119 residues: Large ribosomal subunit protein uL24 (119 aa).

This sequence belongs to the universal ribosomal protein uL24 family. In terms of assembly, part of the 50S ribosomal subunit.

Its function is as follows. One of two assembly initiator proteins, it binds directly to the 5'-end of the 23S rRNA, where it nucleates assembly of the 50S subunit. In terms of biological role, located at the polypeptide exit tunnel on the outside of the subunit. This Methanococcus maripaludis (strain C5 / ATCC BAA-1333) protein is Large ribosomal subunit protein uL24.